Here is a 132-residue protein sequence, read N- to C-terminus: Small ribosomal subunit protein uS8 (132 aa).

This sequence belongs to the universal ribosomal protein uS8 family. In terms of assembly, part of the 30S ribosomal subunit. Contacts proteins S5 and S12.

Its function is as follows. One of the primary rRNA binding proteins, it binds directly to 16S rRNA central domain where it helps coordinate assembly of the platform of the 30S subunit. This chain is Small ribosomal subunit protein uS8, found in Bifidobacterium longum (strain NCC 2705).